Here is a 95-residue protein sequence, read N- to C-terminus: Small ribosomal subunit protein bS6 (95 aa).

The protein belongs to the bacterial ribosomal protein bS6 family.

Functionally, binds together with bS18 to 16S ribosomal RNA. This chain is Small ribosomal subunit protein bS6, found in Nocardia farcinica (strain IFM 10152).